We begin with the raw amino-acid sequence, 212 residues long: Probable GTP-binding protein EngB (212 aa).

An EngB-type G domain is found at G22–I212. Residues G30–S37, G57–E61, D95–G98, T162–D165, and I192–A195 contribute to the GTP site. Residues S37 and T59 each coordinate Mg(2+).

It belongs to the TRAFAC class TrmE-Era-EngA-EngB-Septin-like GTPase superfamily. EngB GTPase family. Mg(2+) is required as a cofactor.

Necessary for normal cell division and for the maintenance of normal septation. The sequence is that of Probable GTP-binding protein EngB from Treponema denticola (strain ATCC 35405 / DSM 14222 / CIP 103919 / JCM 8153 / KCTC 15104).